Here is a 319-residue protein sequence, read N- to C-terminus: ATP-dependent 6-phosphofructokinase (319 aa).

Gly-11 lines the ATP pocket. Position 21–25 (Arg-21–Arg-25) interacts with ADP. Residues Arg-72 to Cys-73 and Gly-102 to Ser-105 each bind ATP. Position 103 (Asp-103) interacts with Mg(2+). Position 125 to 127 (Thr-125 to Asp-127) interacts with substrate. Catalysis depends on Asp-127, which acts as the Proton acceptor. Arg-154 is an ADP binding site. Substrate-binding positions include Arg-162 and Met-169–Arg-171. Residues Gly-185–Glu-187, Arg-211, and Lys-213–His-215 each bind ADP. Residues Glu-222, Arg-243, and His-249 to Arg-252 contribute to the substrate site.

This sequence belongs to the phosphofructokinase type A (PFKA) family. ATP-dependent PFK group I subfamily. Prokaryotic clade 'B1' sub-subfamily. Homotetramer. Component of a possible RNA degradosome complex composed of rny, rnjA, rnjB, pnp, pfkA and eno (although rnjA and rnjB's presence is unclear). Specifically interacts with RNase Y (rny, PubMed:21803996) and enolase (eno, PubMed:22198292). Interacts with BrxC. It depends on Mg(2+) as a cofactor.

The protein localises to the cytoplasm. The catalysed reaction is beta-D-fructose 6-phosphate + ATP = beta-D-fructose 1,6-bisphosphate + ADP + H(+). It participates in carbohydrate degradation; glycolysis; D-glyceraldehyde 3-phosphate and glycerone phosphate from D-glucose: step 3/4. Its activity is regulated as follows. Allosterically activated by ADP and other diphosphonucleosides, and allosterically inhibited by phosphoenolpyruvate. In terms of biological role, catalyzes the phosphorylation of D-fructose 6-phosphate to fructose 1,6-bisphosphate by ATP, the first committing step of glycolysis. The protein is ATP-dependent 6-phosphofructokinase of Bacillus subtilis (strain 168).